A 390-amino-acid chain; its full sequence is Flagellar P-ring protein (390 aa).

An N-terminal signal peptide occupies residues 1–36 (MFFSRKIRSLLLTPKRRWSLILTLCLIFTGINFSTS).

The protein belongs to the FlgI family. As to quaternary structure, the basal body constitutes a major portion of the flagellar organelle and consists of four rings (L,P,S, and M) mounted on a central rod.

It localises to the periplasm. Its subcellular location is the bacterial flagellum basal body. Functionally, assembles around the rod to form the L-ring and probably protects the motor/basal body from shearing forces during rotation. The chain is Flagellar P-ring protein from Desulfotalea psychrophila (strain LSv54 / DSM 12343).